Consider the following 308-residue polypeptide: Thiohydrolase (308 aa).

It belongs to the polyketide transferase af380 family.

Its pathway is mycotoxin biosynthesis. In terms of biological role, thiohydrolase; part of the gene cluster that mediates the biosynthesis of brefeldin A (BFA), a protein transport inhibitor that shows antiviral, antifungal, and antitumor properties. The proposed biosynthesis of BFA involves formation of an acyclic polyketide chain that is differentially tailored throughout the backbone. The highly reducing polyketide synthase Bref-PKS is proposed to synthesize the precisely reduced octaketide precursor, which could then be directly offloaded by the thiohydrolase enzyme Bref-TH followed by a cytochrome P450 monooxygenase-mediated formation of the cyclopentane ring and macrocyclization to afford 7-deoxy BFA. Alternatively, the first ring annulation can also occur on the ACP-tethered intermediate before the thiohydrolase release and lactonization. The C7-hydroxylation by another cytochrome P450 monooxygenase is believed to be the final step in the process to obtain the final structure of BFA. In addition to the HRPKS Bref-PKS and the thiohydrolase Bref-TH, the brefeldin A biosynthesis cluster contains 4 cytochrome p450 monooxygenases (called orf3 to orf6), as well a the probable cluster-specific transcription regulator orf8. The sequence is that of Thiohydrolase from Eupenicillium brefeldianum (Penicillium brefeldianum).